A 501-amino-acid chain; its full sequence is Ribose import ATP-binding protein RbsA (501 aa).

ABC transporter domains are found at residues 5–241 and 252–495; these read LQLQ…VGRK and APGE…VGKQ. Residue 37 to 44 participates in ATP binding; that stretch reads GENGAGKS.

This sequence belongs to the ABC transporter superfamily. Ribose importer (TC 3.A.1.2.1) family. In terms of assembly, the complex is composed of an ATP-binding protein (RbsA), two transmembrane proteins (RbsC) and a solute-binding protein (RbsB).

The protein localises to the cell inner membrane. The catalysed reaction is D-ribose(out) + ATP + H2O = D-ribose(in) + ADP + phosphate + H(+). Part of the ABC transporter complex RbsABC involved in ribose import. Responsible for energy coupling to the transport system. The chain is Ribose import ATP-binding protein RbsA from Pectobacterium atrosepticum (strain SCRI 1043 / ATCC BAA-672) (Erwinia carotovora subsp. atroseptica).